The sequence spans 357 residues: Acyl-CoA Delta12-desaturase (357 aa).

Transmembrane regions (helical) follow at residues 49–69 and 72–92; these read VLWF…IFAS and IYTT…ITAG. 5 residues coordinate Fe cation: histidine 94, histidine 99, histidine 131, histidine 134, and histidine 135. The Histidine box-1 signature appears at 94–99; sequence HRLWAH. Positions 131–135 match the Histidine box-2 motif; the sequence is HRVHH. Transmembrane regions (helical) follow at residues 195–215 and 223–245; these read LVPF…WGET and STMF…AHMW. Fe cation-binding residues include histidine 243, histidine 272, histidine 275, and histidine 276. The Histidine box-3 motif lies at 272–276; the sequence is HNFHH.

The protein belongs to the fatty acid desaturase type 1 family. The cofactor is Fe(2+).

The protein localises to the membrane. It catalyses the reaction (9Z)-octadecenoyl-CoA + 2 Fe(II)-[cytochrome b5] + O2 + 2 H(+) = (9Z,12Z)-octadecadienoyl-CoA + 2 Fe(III)-[cytochrome b5] + 2 H2O. It carries out the reaction (9Z)-hexadecenoyl-CoA + 2 Fe(II)-[cytochrome b5] + O2 + 2 H(+) = (9Z,12Z)-hexadecadienoyl-CoA + 2 Fe(III)-[cytochrome b5] + 2 H2O. The enzyme catalyses hexadecanoyl-CoA + 2 Fe(II)-[cytochrome b5] + O2 + 2 H(+) = (9Z)-hexadecenoyl-CoA + 2 Fe(III)-[cytochrome b5] + 2 H2O. Catalyzes the formation of a Delta12 double bond, acting on monounsaturated fatty acyl substrates like palmitoleoyl-CoA ((9Z)-hexadecenoyl-CoA) and oleoyl-CoA ((9Z)-octadecenoyl-CoA) with higher desaturation activity on (9Z)-octadecenoyl-CoA than (9Z)-hexadecenoyl-CoA. Requires preexisting cis double bond at the Delta9 position of fatty acyls to be able to insert the Delta12 double bond. Delta12-desaturation of (9Z)-octadecenoyl-CoA in insects produces (9Z,12Z)-octadecadienoyl-CoA (linoleoyl-CoA) which may be used to supply precursors of crucial mediators of immunity and reproduction and other essential functions. Can also catalyze Delta9-desaturation on saturated fatty acyl substrates like palmitoyl-CoA (hexadecanoyl-CoA) but with lower efficiency. This is Acyl-CoA Delta12-desaturase from Acheta domesticus (House cricket).